Reading from the N-terminus, the 195-residue chain is ATP-dependent Clp protease proteolytic subunit (195 aa).

Residue S98 is the Nucleophile of the active site. The active site involves H123.

This sequence belongs to the peptidase S14 family. Fourteen ClpP subunits assemble into 2 heptameric rings which stack back to back to give a disk-like structure with a central cavity, resembling the structure of eukaryotic proteasomes.

The protein resides in the cytoplasm. The enzyme catalyses Hydrolysis of proteins to small peptides in the presence of ATP and magnesium. alpha-casein is the usual test substrate. In the absence of ATP, only oligopeptides shorter than five residues are hydrolyzed (such as succinyl-Leu-Tyr-|-NHMec, and Leu-Tyr-Leu-|-Tyr-Trp, in which cleavage of the -Tyr-|-Leu- and -Tyr-|-Trp bonds also occurs).. Functionally, cleaves peptides in various proteins in a process that requires ATP hydrolysis. Has a chymotrypsin-like activity. Plays a major role in the degradation of misfolded proteins. The polypeptide is ATP-dependent Clp protease proteolytic subunit (Thermoanaerobacter pseudethanolicus (strain ATCC 33223 / 39E) (Clostridium thermohydrosulfuricum)).